The primary structure comprises 237 residues: MRFSPSLEQGRLLRRYKRFLADIELASGEQMTIHCPNTGSMLNCMREGGQVWFSRSNDPKRKLPGTWEISETPQGRLACVNTGRANALVEEALRAGTITELAGFTALKREVAYGEEGSRIDFRLEFEGAPAYVEVKSVTLGYPDTAVAAFPDAVTQRGAKHLRELAKLARQGVRAVQLYCVNLTGIDAVRPAEEIDTAYAQALRAAVADGVEVLAYGTRLDAEGIVIDRRLPVLLTP.

This sequence belongs to the SfsA family.

In Pseudomonas putida (strain ATCC 47054 / DSM 6125 / CFBP 8728 / NCIMB 11950 / KT2440), this protein is Sugar fermentation stimulation protein homolog.